The following is a 565-amino-acid chain: Sulfite reductase [NADPH] hemoprotein beta-component (565 aa).

[4Fe-4S] cluster contacts are provided by cysteine 429, cysteine 435, cysteine 474, and cysteine 478. Residue cysteine 478 participates in siroheme binding.

The protein belongs to the nitrite and sulfite reductase 4Fe-4S domain family. Alpha(8)-beta(8). The alpha component is a flavoprotein, the beta component is a hemoprotein. It depends on siroheme as a cofactor. Requires [4Fe-4S] cluster as cofactor.

The enzyme catalyses hydrogen sulfide + 3 NADP(+) + 3 H2O = sulfite + 3 NADPH + 4 H(+). It functions in the pathway sulfur metabolism; hydrogen sulfide biosynthesis; hydrogen sulfide from sulfite (NADPH route): step 1/1. Functionally, component of the sulfite reductase complex that catalyzes the 6-electron reduction of sulfite to sulfide. This is one of several activities required for the biosynthesis of L-cysteine from sulfate. This is Sulfite reductase [NADPH] hemoprotein beta-component from Shewanella sp. (strain W3-18-1).